The sequence spans 69 residues: DNA gyrase inhibitor YacG (69 aa).

Residues 1 to 15 (MSDEPEHTAKVEPLR) show a composition bias toward basic and acidic residues. The disordered stretch occupies residues 1–22 (MSDEPEHTAKVEPLRKPLPCPE). Zn(2+) is bound by residues C20, C23, C35, and C39.

This sequence belongs to the DNA gyrase inhibitor YacG family. As to quaternary structure, interacts with GyrB. Zn(2+) serves as cofactor.

Inhibits all the catalytic activities of DNA gyrase by preventing its interaction with DNA. Acts by binding directly to the C-terminal domain of GyrB, which probably disrupts DNA binding by the gyrase. The sequence is that of DNA gyrase inhibitor YacG from Allorhizobium ampelinum (strain ATCC BAA-846 / DSM 112012 / S4) (Agrobacterium vitis (strain S4)).